A 1329-amino-acid chain; its full sequence is Synergin gamma (1329 aa).

The stretch at 112-152 (MQKQFAEEQQKRFEQQQKLLEEERKRRQFEEQKQKLRLLSS) forms a coiled coil. Residues 175-211 (GFSRDAKMHPTPASHPKKPDCPTSSHSTKTVSPSSAF) form a disordered region. Residues 197 to 209 (TSSHSTKTVSPSS) are compositionally biased toward low complexity. The 112-residue stretch at 393–504 (NESLVPDAYK…TPVSQPTAMT (112 aa)) folds into the EH domain. The short motif at 555–559 (DFQDF) is the DFXDF motif 1 element. Ser571 carries the post-translational modification Phosphoserine. Positions 578 to 594 (VPASSKTSNSQHGNSAP) are enriched in polar residues. A disordered region spans residues 578–600 (VPASSKTSNSQHGNSAPSLLIPL). N6-acetyllysine is present on Lys609. Residues 614-878 (KGISAEKPSE…ADFHSSKFSS (265 aa)) are interaction with AP1G1. 2 disordered regions span residues 661–701 (GTDD…TQTQ) and 730–753 (AFSTSKSVSSRPQPAGSAAAPASL). Residue Ser676 is modified to Phosphoserine. Positions 761-773 (LADDFGEFNLFGE) are interaction with AP1G1, AP1G2 and GGA1. The DFXDF motif 2 motif lies at 785 to 789 (DFADF). The disordered stretch occupies residues 797-835 (IPSEPKADDKYEALREEGSPGALSTSTVEGAHNPPVSSS). Positions 801 to 814 (PKADDKYEALREEG) are enriched in basic and acidic residues. Ser815 is subject to Phosphoserine. The residue at position 836 (Lys836) is an N6-acetyllysine. 2 positions are modified to phosphoserine: Ser844 and Ser864. Disordered regions lie at residues 856–922 (KENT…DSED), 941–1042 (HVMS…FGEF), and 1088–1113 (SLSLGDKEISRSSPSPALEQPFRDRS). A compositionally biased stretch (basic and acidic residues) spans 864-873 (SDGDFADFHS). A DFXDF motif 3 motif is present at residues 867 to 871 (DFADF). Positions 874-883 (SKFSSTSSDK) are enriched in low complexity. Ser904, Ser944, Ser947, Ser997, Ser1021, Ser1088, Ser1090, Ser1102, and Ser1113 each carry phosphoserine. Over residues 944–955 (SDSSLDLPTVSG) the composition is skewed to polar residues. Polar residues predominate over residues 1016 to 1028 (ENTCPSPASSVAS). Residue Thr1115 is modified to Phosphothreonine.

In terms of assembly, self-associates. Interacts with GGA1 (via GAE domain). Interacts with GGA2 and GGA3. Interacts with AP1G1 (via GAE domain), a subunit of adapter protein complex AP-1. Interacts with AP1G2 (via GAE domain) a subunit of adapter protein complex AP-1. Component of the aftiphilin/p200/gamma-synergin complex, at least composed of AFTPH/aftiphilin, HEATR5B/p200a and SYNRG/gamma-synergin, which plays a role in the AP1G1/AP-1-mediated trafficking of transferrin from early to recycling endosomes. Within the complex interacts with AFTPH/aftiphilin and HEATR5B/p200a; the interactions are direct. Interacts (via EH domain) with SCAMP1. Detected in brain and liver (at protein level). Ubiquitously expressed.

It is found in the cytoplasm. Its subcellular location is the golgi apparatus. The protein localises to the trans-Golgi network membrane. It localises to the perinuclear region. The protein resides in the cytoplasmic vesicle. It is found in the clathrin-coated vesicle. Plays a role in endocytosis and/or membrane trafficking at the trans-Golgi network (TGN). May act by linking the adapter protein complex AP-1 to other proteins. Component of clathrin-coated vesicles. Component of the aftiphilin/p200/gamma-synergin complex, which plays roles in AP1G1/AP-1-mediated protein trafficking including the trafficking of transferrin from early to recycling endosomes, and the membrane trafficking of furin and the lysosomal enzyme cathepsin D between the trans-Golgi network (TGN) and endosomes. The chain is Synergin gamma (Synrg) from Rattus norvegicus (Rat).